Consider the following 80-residue polypeptide: Cytochrome c oxidase subunit 7B, mitochondrial (80 aa).

Residues 1-24 (MFPLVKSALNRLQVRSIQQTMARQ) constitute a mitochondrion transit peptide. The Mitochondrial matrix segment spans residues 25–32 (SHQKRTPD). Residues 33–59 (FHDKYGNAVLASGATFCIVTWTYVATQ) form a helical membrane-spanning segment. Residues 60 to 80 (VGIEWNLSPVGRVTPKEWRNQ) lie on the Mitochondrial intermembrane side of the membrane.

This sequence belongs to the cytochrome c oxidase VIIb family. In terms of assembly, component of the cytochrome c oxidase (complex IV, CIV), a multisubunit enzyme composed of 14 subunits. The complex is composed of a catalytic core of 3 subunits MT-CO1, MT-CO2 and MT-CO3, encoded in the mitochondrial DNA, and 11 supernumerary subunits COX4I1 (or COX4I2), COX5A, COX5B, COX6A1 (or COX6A2), COX6B1 (or COX6B2), COX6C, COX7A2 (or COX7A1), COX7B, COX7C, COX8A and NDUFA4, which are encoded in the nuclear genome. The complex exists as a monomer or a dimer and forms supercomplexes (SCs) in the inner mitochondrial membrane with NADH-ubiquinone oxidoreductase (complex I, CI) and ubiquinol-cytochrome c oxidoreductase (cytochrome b-c1 complex, complex III, CIII), resulting in different assemblies (supercomplex SCI(1)III(2)IV(1) and megacomplex MCI(2)III(2)IV(2)).

It is found in the mitochondrion inner membrane. It functions in the pathway energy metabolism; oxidative phosphorylation. Component of the cytochrome c oxidase, the last enzyme in the mitochondrial electron transport chain which drives oxidative phosphorylation. The respiratory chain contains 3 multisubunit complexes succinate dehydrogenase (complex II, CII), ubiquinol-cytochrome c oxidoreductase (cytochrome b-c1 complex, complex III, CIII) and cytochrome c oxidase (complex IV, CIV), that cooperate to transfer electrons derived from NADH and succinate to molecular oxygen, creating an electrochemical gradient over the inner membrane that drives transmembrane transport and the ATP synthase. Cytochrome c oxidase is the component of the respiratory chain that catalyzes the reduction of oxygen to water. Electrons originating from reduced cytochrome c in the intermembrane space (IMS) are transferred via the dinuclear copper A center (CU(A)) of subunit 2 and heme A of subunit 1 to the active site in subunit 1, a binuclear center (BNC) formed by heme A3 and copper B (CU(B)). The BNC reduces molecular oxygen to 2 water molecules using 4 electrons from cytochrome c in the IMS and 4 protons from the mitochondrial matrix. Plays a role in proper central nervous system (CNS) development in vertebrates. The sequence is that of Cytochrome c oxidase subunit 7B, mitochondrial (COX7B) from Homo sapiens (Human).